Here is a 236-residue protein sequence, read N- to C-terminus: Eukaryotic translation initiation factor 3 subunit K (236 aa).

Residues 42 to 222 (YDKDILVTTL…TIKSRNIEEK (181 aa)) form the PCI domain.

This sequence belongs to the eIF-3 subunit K family. As to quaternary structure, component of the eukaryotic translation initiation factor 3 (eIF-3) complex.

The protein resides in the cytoplasm. Functionally, component of the eukaryotic translation initiation factor 3 (eIF-3) complex, which is involved in protein synthesis of a specialized repertoire of mRNAs and, together with other initiation factors, stimulates binding of mRNA and methionyl-tRNAi to the 40S ribosome. The eIF-3 complex specifically targets and initiates translation of a subset of mRNAs involved in cell proliferation. This chain is Eukaryotic translation initiation factor 3 subunit K, found in Brugia malayi (Filarial nematode worm).